The chain runs to 326 residues: Tagatose 1,6-diphosphate aldolase (326 aa).

The protein belongs to the aldolase LacD family.

It carries out the reaction D-tagatofuranose 1,6-bisphosphate = D-glyceraldehyde 3-phosphate + dihydroxyacetone phosphate. Its pathway is carbohydrate metabolism; D-tagatose 6-phosphate degradation; D-glyceraldehyde 3-phosphate and glycerone phosphate from D-tagatose 6-phosphate: step 2/2. This chain is Tagatose 1,6-diphosphate aldolase, found in Streptococcus pneumoniae (strain ATCC BAA-255 / R6).